The chain runs to 391 residues: Leucine-rich repeat-containing protein 74B (391 aa).

The segment at 1–38 (MKGPCEVQKNEDQEGEAAATGPQAETLEAERSWTADSH) is disordered. Residues 28-38 (EAERSWTADSH) show a composition bias toward basic and acidic residues. LRR repeat units follow at residues 106–126 (YIKR…EALA), 134–154 (IISD…QAIC), 162–182 (TVEK…QHLA), 190–211 (GLKS…ILGP), 218–239 (GLTE…AFAR), 246–259 (FLKV…GFGD), 274–294 (VLEE…LKLG), 302–323 (TLRI…GLLK), and 332–354 (ALEL…ASSM). Positions 371–391 (KDWPQASTPSQPASAPSDSGL) are disordered. The span at 374–391 (PQASTPSQPASAPSDSGL) shows a compositional bias: low complexity.

In Mus musculus (Mouse), this protein is Leucine-rich repeat-containing protein 74B.